Reading from the N-terminus, the 699-residue chain is MAREYKIEDYRNFGIMAHIDAGKTTTTERILYYTGKSHKIGEVHDGAATMDWMEQEQERGITITSAATTTFWKGRDGKSRRFNIIDTPGHVDFTIEVERSLRVLDGAIALLDANAGVEPQTETVWRQAEKYNVPRMIFCNKMDKTGADFYRSVEMIKTRLGATAVVMQLPIGAESDFKGVVDLIEMNALIWRDESLGAQWDVVEIPDDLKEKAEEYREKLIETVVEIDEAAMEAYLEGQYPDNEQIRALVRRGTIDVKFHPMFCGTAFKNKGVQPLLDAVVDYLPSPVDIPAIKGIDVKTEAEIERHASDEEPLSMLAFKIMNDPFVGSLTFARIYSGKLEKGTSVMNTVKEKRERVGRMLQMHSNSREDIEEAFAGDIVALAGLKETTTGDTLCDPLKQVILERMEFPEPVIQIAIEPKTKGDQEKMGLALNRLAAEDPSFRVKTDEESGQTIIAGMGELHLDILVDRMRREFKVEATVGAPQVAYRETITRQHEEDYTHKKQSGGTGQFARVKIVFEPNPEGEEFKFESKIVGGAVPKEYIPGVQKGIESVLSSGPLAGFPMLGVKATLIDGAFHDVDSSVLAFEIASRACFREAAKKAGAQLLEPIMKVEVVTPEDYVGDVIGDLNSRRGQIQGQEARGVAVVINAHVPLANMFKYVDNLRSMSQGRAQYTMLFDHYAPVPSNVAQEIQAKYSGQK.

Residues 8–288 (EDYRNFGIMA…AVVDYLPSPV (281 aa)) enclose the tr-type G domain. Residues 17 to 24 (AHIDAGKT), 86 to 90 (DTPGH), and 140 to 143 (NKMD) each bind GTP.

This sequence belongs to the TRAFAC class translation factor GTPase superfamily. Classic translation factor GTPase family. EF-G/EF-2 subfamily.

The protein resides in the cytoplasm. Catalyzes the GTP-dependent ribosomal translocation step during translation elongation. During this step, the ribosome changes from the pre-translocational (PRE) to the post-translocational (POST) state as the newly formed A-site-bound peptidyl-tRNA and P-site-bound deacylated tRNA move to the P and E sites, respectively. Catalyzes the coordinated movement of the two tRNA molecules, the mRNA and conformational changes in the ribosome. This Sinorhizobium medicae (strain WSM419) (Ensifer medicae) protein is Elongation factor G.